The following is a 957-amino-acid chain: Plasma membrane ATPase 1 (957 aa).

Topologically, residues 1–66 (MGEEKPEVLD…EKKDSKLLKF (66 aa)) are cytoplasmic. A helical membrane pass occupies residues 67–86 (LGFMWNPLSWVMEAAAIMAI). The Extracellular portion of the chain corresponds to 87–98 (ALANGGGKPPDW). Residues 99-119 (QDFVGIITLLIINSTISFIEE) form a helical membrane-spanning segment. Residues 120–248 (NNAGNAAAAL…GHFQKVLTAI (129 aa)) are Cytoplasmic-facing. A helical transmembrane segment spans residues 249–269 (GNFCICSIAVGMIIEIIVMYP). The Extracellular portion of the chain corresponds to 270-279 (IQHRAYRPGI). A helical membrane pass occupies residues 280–301 (DNLLVLLIGGIPIAMPTVLSVT). Topologically, residues 302-648 (MAIGSHRLAQ…TSRAIFQRMK (347 aa)) are cytoplasmic. The 4-aspartylphosphate intermediate role is filled by D334. D593 and D597 together coordinate Mg(2+). The chain crosses the membrane as a helical span at residues 649–670 (NYTIYAVSITIRIVLGFMLLAL). The Extracellular segment spans residues 671 to 675 (IWKFD). The chain crosses the membrane as a helical span at residues 676–698 (FPPFMVLIIAILNDGTIMTISKD). Residues 699 to 714 (RVKPSPLPDSWKLAEI) are Cytoplasmic-facing. The chain crosses the membrane as a helical span at residues 715–735 (FTTGIVLGGYLAMMTVIFFWA). Residues 736–760 (AYKTNFFPHVFGVSTLEKTATDDFR) lie on the Extracellular side of the membrane. A helical transmembrane segment spans residues 761–781 (KLASAIYLQVSIISQALIFVT). Over 782 to 793 (RSRSWSFVERPG) the chain is Cytoplasmic. The chain crosses the membrane as a helical span at residues 794–814 (FLLVIAFVIAQLVATLIAVYA). Residues 815–823 (NWSFAAIEG) are Extracellular-facing. The helical transmembrane segment at 824 to 844 (IGWGWAGVIWIYNLVFYIPLD) threads the bilayer. The Cytoplasmic segment spans residues 845–957 (IIKFFIRYAL…IETIQQAYTV (113 aa)).

It belongs to the cation transport ATPase (P-type) (TC 3.A.3) family. Type IIIA subfamily. Expressed in roots, stems, leaves from both vegetative and flowering plants, and flowers at early and late stages of development with highest expression levels found in flowers and stem.

The protein resides in the cell membrane. It carries out the reaction ATP + H2O + H(+)(in) = ADP + phosphate + 2 H(+)(out). Its function is as follows. The plasma membrane ATPase of plants and fungi is a hydrogen ion pump. The proton gradient it generates drives the active transport of nutrients by H(+)-symport. The resulting external acidification and/or internal alkinization may mediate growth responses. This Nicotiana plumbaginifolia (Leadwort-leaved tobacco) protein is Plasma membrane ATPase 1 (PMA1).